An 88-amino-acid chain; its full sequence is uncharacterized protein (88 aa).

A dksA C4-type zinc finger spans residues 39 to 63 (CEECGAPIPQARREAIPGVRLCIHC).

This is an uncharacterized protein from Escherichia coli (strain K12).